An 82-amino-acid polypeptide reads, in one-letter code: MNPIVAAASVVSAGLAVGLAAIGPGMGQGTAAGYAVEGIARQPEAEGKIRGALLLSFAFMESLTIYGLVVALALLFANPFAS.

Helical transmembrane passes span 3–23 and 57–77; these read PIVAAASVVSAGLAVGLAAIG and FAFMESLTIYGLVVALALLFA.

This sequence belongs to the ATPase C chain family. As to quaternary structure, F-type ATPases have 2 components, F(1) - the catalytic core - and F(0) - the membrane proton channel. F(1) has five subunits: alpha(3), beta(3), gamma(1), delta(1), epsilon(1). F(0) has four main subunits: a(1), b(1), b'(1) and c(10-14). The alpha and beta chains form an alternating ring which encloses part of the gamma chain. F(1) is attached to F(0) by a central stalk formed by the gamma and epsilon chains, while a peripheral stalk is formed by the delta, b and b' chains.

It localises to the plastid. The protein localises to the chloroplast thylakoid membrane. Functionally, f(1)F(0) ATP synthase produces ATP from ADP in the presence of a proton or sodium gradient. F-type ATPases consist of two structural domains, F(1) containing the extramembraneous catalytic core and F(0) containing the membrane proton channel, linked together by a central stalk and a peripheral stalk. During catalysis, ATP synthesis in the catalytic domain of F(1) is coupled via a rotary mechanism of the central stalk subunits to proton translocation. Its function is as follows. Key component of the F(0) channel; it plays a direct role in translocation across the membrane. A homomeric c-ring of between 10-14 subunits forms the central stalk rotor element with the F(1) delta and epsilon subunits. This Tetradesmus obliquus (Green alga) protein is ATP synthase subunit c, chloroplastic.